The primary structure comprises 385 residues: NADH-ubiquinone oxidoreductase chain 2 (385 aa).

A run of 10 helical transmembrane segments spans residues 12–32 (PVLVLMVALGSILLVSASNWL), 34–50 (VYLAIELPTLSLFILVA), 66–86 (FVLGALASGLFLFGCALLCGL), 112–132 (VITPIGSLLITGALLFKLSAA), 161–181 (VFSILVSIGPVANVLLIATIF), 200–220 (LAYSGIAHMGFVLWGIEIGTF), 227–247 (LIYMILYVIMSVCAFAMVLAL), 268–288 (AITLALTFLSIAGVPPLIGFF), 291–311 (WWILLSGITYQYYLVSILAVI), and 354–374 (LLIGASFYLMGFMIISPNLLL).

Belongs to the complex I subunit 2 family.

It localises to the mitochondrion inner membrane. It carries out the reaction a ubiquinone + NADH + 5 H(+)(in) = a ubiquinol + NAD(+) + 4 H(+)(out). In terms of biological role, core subunit of the mitochondrial membrane respiratory chain NADH dehydrogenase (Complex I) that is believed to belong to the minimal assembly required for catalysis. Complex I functions in the transfer of electrons from NADH to the respiratory chain. The immediate electron acceptor for the enzyme is believed to be ubiquinone. The sequence is that of NADH-ubiquinone oxidoreductase chain 2 (ND2) from Metridium senile (Brown sea anemone).